Reading from the N-terminus, the 994-residue chain is Bifunctional glutamine synthetase adenylyltransferase/adenylyl-removing enzyme (994 aa).

The tract at residues 1–487 (MVVTKLATQR…LHTKLFYQPL (487 aa)) is adenylyl removase. The segment at 492-994 (GPTGLEIAHG…KAVVRKVFGS (503 aa)) is adenylyl transferase.

The protein belongs to the GlnE family. It depends on Mg(2+) as a cofactor.

The catalysed reaction is [glutamine synthetase]-O(4)-(5'-adenylyl)-L-tyrosine + phosphate = [glutamine synthetase]-L-tyrosine + ADP. It carries out the reaction [glutamine synthetase]-L-tyrosine + ATP = [glutamine synthetase]-O(4)-(5'-adenylyl)-L-tyrosine + diphosphate. Involved in the regulation of glutamine synthetase GlnA, a key enzyme in the process to assimilate ammonia. When cellular nitrogen levels are high, the C-terminal adenylyl transferase (AT) inactivates GlnA by covalent transfer of an adenylyl group from ATP to specific tyrosine residue of GlnA, thus reducing its activity. Conversely, when nitrogen levels are low, the N-terminal adenylyl removase (AR) activates GlnA by removing the adenylyl group by phosphorolysis, increasing its activity. The regulatory region of GlnE binds the signal transduction protein PII (GlnB) which indicates the nitrogen status of the cell. The polypeptide is Bifunctional glutamine synthetase adenylyltransferase/adenylyl-removing enzyme (Mycobacterium tuberculosis (strain CDC 1551 / Oshkosh)).